A 239-amino-acid polypeptide reads, in one-letter code: 7-cyano-7-deazaguanine synthase (239 aa).

Residue 8–18 (LSGGLDSPTVL) participates in ATP binding. Positions 188, 196, 199, and 202 each coordinate Zn(2+).

This sequence belongs to the QueC family. Requires Zn(2+) as cofactor.

It carries out the reaction 7-carboxy-7-deazaguanine + NH4(+) + ATP = 7-cyano-7-deazaguanine + ADP + phosphate + H2O + H(+). It participates in purine metabolism; 7-cyano-7-deazaguanine biosynthesis. Catalyzes the ATP-dependent conversion of 7-carboxy-7-deazaguanine (CDG) to 7-cyano-7-deazaguanine (preQ(0)). The protein is 7-cyano-7-deazaguanine synthase of Picrophilus torridus (strain ATCC 700027 / DSM 9790 / JCM 10055 / NBRC 100828 / KAW 2/3).